The chain runs to 229 residues: Cytidylate kinase (229 aa).

12–20 (GPSGAGKGT) serves as a coordination point for ATP.

The protein belongs to the cytidylate kinase family. Type 1 subfamily.

The protein resides in the cytoplasm. The catalysed reaction is CMP + ATP = CDP + ADP. It carries out the reaction dCMP + ATP = dCDP + ADP. The chain is Cytidylate kinase from Pseudomonas paraeruginosa (strain DSM 24068 / PA7) (Pseudomonas aeruginosa (strain PA7)).